The following is a 558-amino-acid chain: Adenine deaminase (558 aa).

The protein belongs to the metallo-dependent hydrolases superfamily. Adenine deaminase family. It depends on Mn(2+) as a cofactor.

It carries out the reaction adenine + H2O + H(+) = hypoxanthine + NH4(+). The protein is Adenine deaminase of Deinococcus deserti (strain DSM 17065 / CIP 109153 / LMG 22923 / VCD115).